Reading from the N-terminus, the 512-residue chain is Cytochrome P450 1A2 (512 aa).

S65 is a glycosylation site (O-linked (GlcNAc) serine). A substrate-binding site is contributed by F222. C454 contacts heme.

Belongs to the cytochrome P450 family. In terms of assembly, interacts with PGRMC1; the interaction requires PGRMC1 homodimerization. The cofactor is heme. In terms of tissue distribution, constitutively expressed in liver.

The protein resides in the endoplasmic reticulum membrane. Its subcellular location is the microsome membrane. It catalyses the reaction an organic molecule + reduced [NADPH--hemoprotein reductase] + O2 = an alcohol + oxidized [NADPH--hemoprotein reductase] + H2O + H(+). The enzyme catalyses 17beta-estradiol + reduced [NADPH--hemoprotein reductase] + O2 = 2-hydroxy-17beta-estradiol + oxidized [NADPH--hemoprotein reductase] + H2O + H(+). The catalysed reaction is 17beta-estradiol + reduced [NADPH--hemoprotein reductase] + O2 = 4-hydroxy-17beta-estradiol + oxidized [NADPH--hemoprotein reductase] + H2O + H(+). It carries out the reaction estrone + reduced [NADPH--hemoprotein reductase] + O2 = 2-hydroxyestrone + oxidized [NADPH--hemoprotein reductase] + H2O + H(+). It catalyses the reaction estrone + reduced [NADPH--hemoprotein reductase] + O2 = 4-hydroxyestrone + oxidized [NADPH--hemoprotein reductase] + H2O + H(+). The enzyme catalyses cholesterol + reduced [NADPH--hemoprotein reductase] + O2 = 25-hydroxycholesterol + oxidized [NADPH--hemoprotein reductase] + H2O + H(+). The catalysed reaction is all-trans-retinol + reduced [NADPH--hemoprotein reductase] + O2 = all-trans-retinal + oxidized [NADPH--hemoprotein reductase] + 2 H2O + H(+). It carries out the reaction all-trans-retinal + reduced [NADPH--hemoprotein reductase] + O2 = all-trans-retinoate + oxidized [NADPH--hemoprotein reductase] + H2O + 2 H(+). It catalyses the reaction (5Z,8Z,11Z,14Z)-eicosatetraenoate + reduced [NADPH--hemoprotein reductase] + O2 = (14R,15S)-epoxy-(5Z,8Z,11Z)-eicosatrienoate + oxidized [NADPH--hemoprotein reductase] + H2O + H(+). The enzyme catalyses (5Z,8Z,11Z,14Z)-eicosatetraenoate + reduced [NADPH--hemoprotein reductase] + O2 = (14S,15R)-epoxy-(5Z,8Z,11Z)-eicosatrienoate + oxidized [NADPH--hemoprotein reductase] + H2O + H(+). The catalysed reaction is (5Z,8Z,11Z,14Z,17Z)-eicosapentaenoate + reduced [NADPH--hemoprotein reductase] + O2 = (17R,18S)-epoxy-(5Z,8Z,11Z,14Z)-eicosatetraenoate + oxidized [NADPH--hemoprotein reductase] + H2O + H(+). It carries out the reaction (4Z,7Z,10Z,13Z,16Z,19Z)-docosahexaenoate + reduced [NADPH--hemoprotein reductase] + O2 = (19R,20S)-epoxy-(4Z,7Z,10Z,13Z,16Z)-docosapentaenoate + oxidized [NADPH--hemoprotein reductase] + H2O + H(+). It catalyses the reaction (5S)-hydroperoxy-(6E,8Z,11Z,14Z)-eicosatetraenoate = 5-oxo-(6E,8Z,11Z,14Z)-eicosatetraenoate + H2O. The enzyme catalyses (12S)-hydroperoxy-(5Z,8Z,10E,14Z)-eicosatetraenoate = 12-oxo-(5Z,8Z,10E,14Z)-eicosatetraenoate + H2O. The catalysed reaction is (15S)-hydroperoxy-(5Z,8Z,11Z,13E)-eicosatetraenoate = 15-oxo-(5Z,8Z,11Z,13E)-eicosatetraenoate + H2O. It carries out the reaction (13S)-hydroperoxy-(9Z,11E)-octadecadienoate = 13-oxo-(9Z,11E)-octadecadienoate + H2O. It catalyses the reaction (5Z,8Z,11Z,14Z)-eicosatetraenoate + reduced [NADPH--hemoprotein reductase] + O2 = 13-hydroxy-(5Z,8Z,11Z,14Z)-eicosatetraenoate + oxidized [NADPH--hemoprotein reductase] + H2O + H(+). The enzyme catalyses (5Z,8Z,11Z,14Z)-eicosatetraenoate + reduced [NADPH--hemoprotein reductase] + O2 = 19-hydroxy-(5Z,8Z,11Z,14Z)-eicosatetraenoate + oxidized [NADPH--hemoprotein reductase] + H2O + H(+). The catalysed reaction is (9Z,12Z)-octadecadienoate + reduced [NADPH--hemoprotein reductase] + O2 = 11-hydroxy-(9Z,12Z)-octadecadienoate + oxidized [NADPH--hemoprotein reductase] + H2O + H(+). Its pathway is cofactor metabolism; retinol metabolism. It functions in the pathway steroid metabolism; cholesterol metabolism. The protein operates within lipid metabolism; arachidonate metabolism. In terms of biological role, a cytochrome P450 monooxygenase involved in the metabolism of various endogenous substrates, including fatty acids, steroid hormones and vitamins. Mechanistically, uses molecular oxygen inserting one oxygen atom into a substrate, and reducing the second into a water molecule, with two electrons provided by NADPH via cytochrome P450 reductase (NADPH--hemoprotein reductase). Catalyzes the hydroxylation of carbon-hydrogen bonds. Exhibits high catalytic activity for the formation of hydroxyestrogens from estrone (E1) and 17beta-estradiol (E2), namely 2-hydroxy E1 and E2. Metabolizes cholesterol toward 25-hydroxycholesterol, a physiological regulator of cellular cholesterol homeostasis. May act as a major enzyme for all-trans retinoic acid biosynthesis in the liver. Catalyzes two successive oxidative transformation of all-trans retinol to all-trans retinal and then to the active form all-trans retinoic acid. Primarily catalyzes stereoselective epoxidation of the last double bond of polyunsaturated fatty acids (PUFA), displaying a strong preference for the (R,S) stereoisomer. Catalyzes bisallylic hydroxylation and omega-1 hydroxylation of PUFA. May also participate in eicosanoids metabolism by converting hydroperoxide species into oxo metabolites (lipoxygenase-like reaction, NADPH-independent). Plays a role in the oxidative metabolism of xenobiotics. Catalyzes the N-hydroxylation of heterocyclic amines and the O-deethylation of phenacetin. Metabolizes caffeine via N3-demethylation. This Canis lupus familiaris (Dog) protein is Cytochrome P450 1A2 (CYP1A2).